The primary structure comprises 283 residues: Myeloid differentiation primary response protein MyD88-B (283 aa).

One can recognise a Death domain in the interval 27–105; that stretch reads RLCLYLNPNA…DILTDLAPLI (79 aa). The segment at 106 to 143 is intermediate domain; it reads EADCKKYLEKKHGPLPLQDDNVDSSEQYRITKSDDPYG. Positions 147–281 constitute a TIR domain; the sequence is ETFDAFICCC…WFWDKLAKAL (135 aa).

It is found in the cytoplasm. Functionally, adapter protein involved in the Toll-like receptor and IL-1 receptor signaling pathway in the innate immune response. Activates expression of target genes in the Spemann organizer region during early embryonic development. Is required for normal axis formation. This chain is Myeloid differentiation primary response protein MyD88-B (myd88-b), found in Xenopus laevis (African clawed frog).